The primary structure comprises 225 residues: Probable polyketide biosynthesis zinc-dependent hydrolase PksB (225 aa).

Positions 62, 64, 66, 67, 123, 140, and 181 each coordinate Zn(2+).

The protein belongs to the metallo-beta-lactamase superfamily. Zn(2+) is required as a cofactor.

The protein localises to the cytoplasm. It functions in the pathway antibiotic biosynthesis; bacillaene biosynthesis. In terms of biological role, probably involved in some intermediate steps for the synthesis of the antibiotic polyketide bacillaene which is involved in secondary metabolism. This chain is Probable polyketide biosynthesis zinc-dependent hydrolase PksB (pksB), found in Bacillus subtilis (strain 168).